The sequence spans 37 residues: Rugosin-C (37 aa).

Residues Cys-31 and Cys-37 are joined by a disulfide bond.

It belongs to the frog skin active peptide (FSAP) family. Brevinin subfamily. Expressed by the skin glands.

Its subcellular location is the secreted. In terms of biological role, has antibacterial activity against Gram-positive bacteria. The polypeptide is Rugosin-C (Glandirana rugosa (Japanese wrinkled frog)).